Here is a 223-residue protein sequence, read N- to C-terminus: DNA mismatch repair protein MutH (223 aa).

Belongs to the MutH family.

The protein localises to the cytoplasm. Its function is as follows. Sequence-specific endonuclease that cleaves unmethylated GATC sequences. It is involved in DNA mismatch repair. The chain is DNA mismatch repair protein MutH from Haemophilus influenzae (strain 86-028NP).